A 265-amino-acid chain; its full sequence is Cyclin-B2-5 (265 aa).

It belongs to the cyclin family. Cyclin AB subfamily.

The polypeptide is Cyclin-B2-5 (CYCB2-5) (Arabidopsis thaliana (Mouse-ear cress)).